Here is a 180-residue protein sequence, read N- to C-terminus: Ribulose bisphosphate carboxylase small subunit, chloroplastic 1 (180 aa).

A chloroplast-targeting transit peptide spans 1-56 (MASSVISSAAVATRTNVAQASMVAPFNGLKSAVSFPVSSKQNLDITSIASNGGRVQ).

It belongs to the RuBisCO small chain family. Heterohexadecamer of 8 large and 8 small subunits.

It is found in the plastid. It localises to the chloroplast. In terms of biological role, ruBisCO catalyzes two reactions: the carboxylation of D-ribulose 1,5-bisphosphate, the primary event in carbon dioxide fixation, as well as the oxidative fragmentation of the pentose substrate. Both reactions occur simultaneously and in competition at the same active site. Although the small subunit is not catalytic it is essential for maximal activity. This is Ribulose bisphosphate carboxylase small subunit, chloroplastic 1 from Petunia hybrida (Petunia).